Reading from the N-terminus, the 652-residue chain is Leucine aminopeptidase 2 (652 aa).

Residues 165 to 167 (QLE) and 293 to 298 (PYGGME) contribute to the a peptide site. A Zn(2+)-binding site is contributed by H322. The active-site Proton acceptor is the E323. Residues H326 and E345 each contribute to the Zn(2+) site. Residue Y411 is the Proton donor of the active site.

This sequence belongs to the peptidase M1 family. Zn(2+) is required as a cofactor.

It localises to the cytoplasm. The protein localises to the nucleus. It carries out the reaction an epoxide + H2O = an ethanediol. Aminopeptidase that preferentially cleaves di- and tripeptides. Also has low epoxide hydrolase activity (in vitro). Can hydrolyze the epoxide leukotriene LTA(4) but it forms preferentially 5,6-dihydroxy-7,9,11,14-eicosatetraenoic acid rather than the cytokine leukotriene B(4) as the product compared to the homologous mammalian enzyme (in vitro). In Candida glabrata (strain ATCC 2001 / BCRC 20586 / JCM 3761 / NBRC 0622 / NRRL Y-65 / CBS 138) (Yeast), this protein is Leucine aminopeptidase 2.